The following is a 244-amino-acid chain: Ubiquinone/menaquinone biosynthesis C-methyltransferase UbiE (244 aa).

Residues Thr-70, Asp-91, and 117 to 118 (DA) contribute to the S-adenosyl-L-methionine site.

It belongs to the class I-like SAM-binding methyltransferase superfamily. MenG/UbiE family.

It carries out the reaction a 2-demethylmenaquinol + S-adenosyl-L-methionine = a menaquinol + S-adenosyl-L-homocysteine + H(+). The catalysed reaction is a 2-methoxy-6-(all-trans-polyprenyl)benzene-1,4-diol + S-adenosyl-L-methionine = a 5-methoxy-2-methyl-3-(all-trans-polyprenyl)benzene-1,4-diol + S-adenosyl-L-homocysteine + H(+). Its pathway is quinol/quinone metabolism; menaquinone biosynthesis; menaquinol from 1,4-dihydroxy-2-naphthoate: step 2/2. The protein operates within cofactor biosynthesis; ubiquinone biosynthesis. In terms of biological role, methyltransferase required for the conversion of demethylmenaquinol (DMKH2) to menaquinol (MKH2) and the conversion of 2-polyprenyl-6-methoxy-1,4-benzoquinol (DDMQH2) to 2-polyprenyl-3-methyl-6-methoxy-1,4-benzoquinol (DMQH2). The sequence is that of Ubiquinone/menaquinone biosynthesis C-methyltransferase UbiE from Laribacter hongkongensis (strain HLHK9).